Reading from the N-terminus, the 318-residue chain is MSKSFILSTGSYLPKKILSNNEIALIVETNDEWIRQRTGIVQRHIADEGELTSDLAVNAAKNAIEKAKISIDEIGLIIVATTTPDKTLPSCATIVQSKLKCKNAFSFDVQAACSGFIYAVTVADSLIKSHNRIKYALVIGAEIMSRIVDWEDRSTCVLFGDSAGAVIIKSEMGSSGIISTNLHSDGNVDILCTNGGVSSTRDSGKILMNGREVFKHAVDKLTASVEETLKCNNLKIIDIDWLIPHQANIRIIEAVVKKLDFPIEKVINTVDKHANTSAASIPLALDYAIQESKIKSGNLVLLISIGAGLTWGSVLLRY.

Active-site residues include cysteine 113 and histidine 245. An ACP-binding region spans residues 246–250 (QANIR). Asparagine 275 is a catalytic residue.

It belongs to the thiolase-like superfamily. FabH family. Homodimer.

The protein localises to the cytoplasm. It carries out the reaction malonyl-[ACP] + acetyl-CoA + H(+) = 3-oxobutanoyl-[ACP] + CO2 + CoA. The protein operates within lipid metabolism; fatty acid biosynthesis. Functionally, catalyzes the condensation reaction of fatty acid synthesis by the addition to an acyl acceptor of two carbons from malonyl-ACP. Catalyzes the first condensation reaction which initiates fatty acid synthesis and may therefore play a role in governing the total rate of fatty acid production. Possesses both acetoacetyl-ACP synthase and acetyl transacylase activities. Its substrate specificity determines the biosynthesis of branched-chain and/or straight-chain of fatty acids. The protein is Beta-ketoacyl-[acyl-carrier-protein] synthase III of Wolbachia pipientis subsp. Culex pipiens (strain wPip).